We begin with the raw amino-acid sequence, 449 residues long: MARRARRPRGRFYAFRRGRWHHLKRLRRRYKFRHRRRQRYRRRAFRKAFHNPRPGTYSVRLPNPQSTMTIRFQGVIFLTEGLILPKNSTAGGYADHMYGARVAKISVNLKEFLLASMNLTYVSKIGGPIAGELIADGSKSQAAENWPNCWLPLDNNVPSATPSAWWRWALMMMQPTDSCRFFNHPKQMTLQDMGRMFGGWHLFRHIETRFQLLATKNEGSFSPVASLLSQGEYLTRRDDVKYSSDHQNRWRKGEQPMTGGIAYATGKMRPDEQQYPAMPPDPPIITSTTAQGTQVRCMYSTQAWWSWDTYMSFATLTALGAQWSFPPGQRSVSRRSFNHHKARGAGDPKGQRWHTLVPLGTETITDSYMGAPASELDTNFFTLYVAQGTNKSQQYKFGTATYALKEPVMKSDSWAVVRVQSVWQLGNRQRPYPWDVNWANSTMYWGTQP.

Positions 1 to 43 (MARRARRPRGRFYAFRRGRWHHLKRLRRRYKFRHRRRQRYRRR) are DNA-binding. The nuclear localization signals stretch occupies residues 6–47 (RRPRGRFYAFRRGRWHHLKRLRRRYKFRHRRRQRYRRRAFRK).

It belongs to the gyrovirus capsid protein family. As to quaternary structure, homomultimer (Potential). Interacts with Rep; this interaction relocates Rep into the nucleus.

The protein localises to the host nucleus. Its subcellular location is the virion. Functionally, self-assembles to form the virion icosahedral capsid with a T=1 symmetry. This very small capsid (25 nm in diameter) allows the virus to be very stable in the environment and resistant to some disinfectants, including detergents. Essential for the initial attachment to host receptors. After attachment, the virus is endocytosed and traffics to the nucleus. The capsid protein binds and transports the viral genome and Rep across the nuclear envelope. This is Capsid protein (VP1) from Chicken anemia virus (isolate Australia) (CAV).